Consider the following 265-residue polypeptide: Ribosomal RNA small subunit methyltransferase G (265 aa).

S-adenosyl-L-methionine contacts are provided by Gly-75, Leu-80, and Arg-145. The tract at residues 212 to 265 (RAVRSSQRTRAESRGGRGDGERHDGRQVRRTSRDSLRSREVGRDQPTRGQSRST) is disordered. The span at 220 to 257 (TRAESRGGRGDGERHDGRQVRRTSRDSLRSREVGRDQP) shows a compositional bias: basic and acidic residues.

The protein belongs to the methyltransferase superfamily. RNA methyltransferase RsmG family.

It is found in the cytoplasm. In terms of biological role, specifically methylates the N7 position of guanine in position 518 of 16S rRNA. This is Ribosomal RNA small subunit methyltransferase G from Frankia casuarinae (strain DSM 45818 / CECT 9043 / HFP020203 / CcI3).